The primary structure comprises 509 residues: Protein disulfide-isomerase (509 aa).

An N-terminal signal peptide occupies residues 1 to 19; it reads MLSRALLCLALAWAARVGA. The 117-residue stretch at 20-136 folds into the Thioredoxin 1 domain; the sequence is DALEEEDNVL…IVNWLKKRTG (117 aa). Residues C55 and C58 each act as nucleophile in the active site. C55 and C58 form a disulfide bridge. K202 is modified (N6-acetyllysine). K224 and K273 each carry N6-succinyllysine. Phosphoserine is present on residues S333 and S359. Residues 335 to 477 enclose the Thioredoxin 2 domain; the sequence is ELTAEKITQF…FKKFLESGGQ (143 aa). Catalysis depends on nucleophile residues C399 and C402. A disulfide bridge links C399 with C402. Phosphoserine is present on S429. The Prevents secretion from ER motif lies at 506–509; the sequence is KDEL.

Belongs to the protein disulfide isomerase family. As to quaternary structure, heterodimer; heterodimerizes with the protein microsomal triglyceride transfer MTTP. Homodimer. Monomers and homotetramers may also occur. Interacts with P4HA2, forming a heterotetramer consisting of 2 alpha subunits (P4HA2) and 2 beta (P4HB), where P4HB plays the role of a structural subunit; this tetramer catalyzes the formation of 4-hydroxyproline in collagen. Also constitutes the structural subunit of the microsomal triacylglycerol transfer protein MTTP in mammalian cells. Stabilizes both enzymes and retain them in the ER without contributing to the catalytic activity. Binds UBQLN1. Interacts with ERO1B. Interacts with ILDR2. Interacts with ERN1/IRE1A (via N-terminus); the interaction is enhanced by phosphorylation of P4HB by FAM20C in response to endoplasmic reticulum stress and results in attenuation of ERN1 activity. Post-translationally, phosphorylation of Ser-359 by FAM20C is induced by endoplasmic reticulum stress and results in a functional switch from oxidoreductase to molecular chaperone. It also promotes interaction with ERN1.

It localises to the endoplasmic reticulum. The protein resides in the endoplasmic reticulum lumen. It is found in the melanosome. The protein localises to the cell membrane. The enzyme catalyses Catalyzes the rearrangement of -S-S- bonds in proteins.. Functionally, this multifunctional protein catalyzes the formation, breakage and rearrangement of disulfide bonds. At the cell surface, seems to act as a reductase that cleaves disulfide bonds of proteins attached to the cell. May therefore cause structural modifications of exofacial proteins. Inside the cell, seems to form/rearrange disulfide bonds of nascent proteins. At high concentrations and following phosphorylation by FAM20C, functions as a chaperone that inhibits aggregation of misfolded proteins. At low concentrations, facilitates aggregation (anti-chaperone activity). May be involved with other chaperones in the structural modification of the TG precursor in hormone biogenesis. Also acts as a structural subunit of various enzymes such as prolyl 4-hydroxylase and microsomal triacylglycerol transfer protein MTTP. Receptor for LGALS9; the interaction retains P4HB at the cell surface of Th2 T helper cells, increasing disulfide reductase activity at the plasma membrane, altering the plasma membrane redox state and enhancing cell migration. This Rattus norvegicus (Rat) protein is Protein disulfide-isomerase (P4hb).